The following is a 179-amino-acid chain: Inner membrane-spanning protein YciB (179 aa).

The next 5 membrane-spanning stretches (helical) occupy residues 22–42 (IYAA…YSWV), 50–70 (MALI…FFHN), 76–96 (WKVT…QWVM), 121–141 (LAWA…AFWL), and 149–169 (FKVF…GVYI).

Belongs to the YciB family.

The protein localises to the cell inner membrane. Functionally, plays a role in cell envelope biogenesis, maintenance of cell envelope integrity and membrane homeostasis. The protein is Inner membrane-spanning protein YciB of Salmonella agona (strain SL483).